The chain runs to 510 residues: Myosin-binding protein C, cardiac-type (510 aa).

3 consecutive Ig-like C2-type domains span residues 177 to 269 (KKST…VKEP), 270 to 347 (PYSS…TVKT), and 378 to 438 (RDQA…SFIP).

The protein belongs to the immunoglobulin superfamily. MyBP family. Heart.

Its function is as follows. Thick filament-associated protein located in the crossbridge region of vertebrate striated muscle a bands. In vitro it binds MHC, F-actin and native thin filaments, and modifies the activity of actin-activated myosin ATPase. It may modulate muscle contraction or may play a more structural role. The protein is Myosin-binding protein C, cardiac-type of Ambystoma mexicanum (Axolotl).